A 455-amino-acid chain; its full sequence is MNEYTDTIVAQATPPGRGGVGIIRVSGPKAKEVALAVAGRELKTRYAEYLPFKNEDGSALDQGIALFFKGPNSFTGEDVLELQGHGGPVLMDMMIRRILKLEGIRPARPGEFSERAFMNDKLDLAQAEAIADLIDASSEEAAKSAFRSLQGAFSTKVNELVEAVIHLRIYVEAAIDFPEEEIDFLSDGKVSNDLHGIIDNLEAVRREANQGSIIREGMKVVIAGRPNAGKSSLLNALSGKDSAIVTDIAGTTRDVLREHIHIDGMPLHIIDTAGLREASNEVERIGIERAWEEIQQADRVLFMVDGTTTNDTDPKDIWPDFIERLPESMGLTVIRNKVELTGEAAGICHVNNPPLIRLSARTGEGIDSLREHLKDCMGFSGTTEGGFMARRRHLEALEQAAQHLEIGKEQLEGFMAGEILAEELRLAQQHLSEITGEFTSDDLLGRIFTSFCIGK.

Residues R24, E81, and K121 each contribute to the (6S)-5-formyl-5,6,7,8-tetrahydrofolate site. The region spanning 217 to 378 (GMKVVIAGRP…LREHLKDCMG (162 aa)) is the TrmE-type G domain. N227 is a binding site for K(+). GTP-binding positions include 227-232 (NAGKSS), 246-252 (TDIAGTT), 271-274 (DTAG), and 359-361 (SAR). S231 is a Mg(2+) binding site. K(+) contacts are provided by T246, I248, and T251. T252 is a binding site for Mg(2+). K455 is a (6S)-5-formyl-5,6,7,8-tetrahydrofolate binding site.

This sequence belongs to the TRAFAC class TrmE-Era-EngA-EngB-Septin-like GTPase superfamily. TrmE GTPase family. Homodimer. Heterotetramer of two MnmE and two MnmG subunits. The cofactor is K(+).

It is found in the cytoplasm. Functionally, exhibits a very high intrinsic GTPase hydrolysis rate. Involved in the addition of a carboxymethylaminomethyl (cmnm) group at the wobble position (U34) of certain tRNAs, forming tRNA-cmnm(5)s(2)U34. The chain is tRNA modification GTPase MnmE from Photobacterium profundum (strain SS9).